The primary structure comprises 456 residues: Bifunctional protein GlmU (456 aa).

The pyrophosphorylase stretch occupies residues 1 to 229; sequence MLNNAMSVVI…LSEVEGVNNR (229 aa). UDP-N-acetyl-alpha-D-glucosamine is bound by residues 11-14, lysine 25, glutamine 76, 81-82, 103-105, glycine 140, glutamate 154, asparagine 169, and asparagine 227; these read LAAG, GT, and YGD. Aspartate 105 contributes to the Mg(2+) binding site. Asparagine 227 contributes to the Mg(2+) binding site. The interval 230 to 250 is linker; it reads LQLSRLERVYQFEQAEKLLLA. Residues 251-456 form an N-acetyltransferase region; sequence GVMLRDPARF…EGWRRPVKKK (206 aa). The UDP-N-acetyl-alpha-D-glucosamine site is built by arginine 333 and lysine 351. Histidine 363 functions as the Proton acceptor in the catalytic mechanism. The UDP-N-acetyl-alpha-D-glucosamine site is built by tyrosine 366 and asparagine 377. Acetyl-CoA contacts are provided by residues alanine 380, 386-387, serine 405, alanine 423, and arginine 440; that span reads NY.

It in the N-terminal section; belongs to the N-acetylglucosamine-1-phosphate uridyltransferase family. This sequence in the C-terminal section; belongs to the transferase hexapeptide repeat family. Homotrimer. Mg(2+) is required as a cofactor.

The protein localises to the cytoplasm. It carries out the reaction alpha-D-glucosamine 1-phosphate + acetyl-CoA = N-acetyl-alpha-D-glucosamine 1-phosphate + CoA + H(+). The catalysed reaction is N-acetyl-alpha-D-glucosamine 1-phosphate + UTP + H(+) = UDP-N-acetyl-alpha-D-glucosamine + diphosphate. The protein operates within nucleotide-sugar biosynthesis; UDP-N-acetyl-alpha-D-glucosamine biosynthesis; N-acetyl-alpha-D-glucosamine 1-phosphate from alpha-D-glucosamine 6-phosphate (route II): step 2/2. It participates in nucleotide-sugar biosynthesis; UDP-N-acetyl-alpha-D-glucosamine biosynthesis; UDP-N-acetyl-alpha-D-glucosamine from N-acetyl-alpha-D-glucosamine 1-phosphate: step 1/1. Its pathway is bacterial outer membrane biogenesis; LPS lipid A biosynthesis. Functionally, catalyzes the last two sequential reactions in the de novo biosynthetic pathway for UDP-N-acetylglucosamine (UDP-GlcNAc). The C-terminal domain catalyzes the transfer of acetyl group from acetyl coenzyme A to glucosamine-1-phosphate (GlcN-1-P) to produce N-acetylglucosamine-1-phosphate (GlcNAc-1-P), which is converted into UDP-GlcNAc by the transfer of uridine 5-monophosphate (from uridine 5-triphosphate), a reaction catalyzed by the N-terminal domain. This is Bifunctional protein GlmU from Escherichia coli O7:K1 (strain IAI39 / ExPEC).